Consider the following 875-residue polypeptide: MTDIDVRLREDVHVLGELLGETIRQQHGDAFLQKIEDIRHSAKADRRGPGEQLSSTLADLAEDDLLPVARAFNQFLNLANMAEQYQLIRRRDADQPEPFEARVLPELLARLKQAGHSNDALARQLAKLDIQLVLTAHPTEVARRTLIQKYDAIAGQLAAQDHRDLSPAERQQVRERLRRLIAEAWHTEEIRRTRPTPVDEAKWGFAVIEHSLWHAIPSHLRKVDKALLEATGLRLPLEAAPIRFASWMGGDRDGNPNVTAAVTREVLLLARWMAADLFLRDIDALAAELSMQQANDALRERVGDSAEPYRAVLKQLRDRLRATRAWAHSALASNQPAGAEVLVDNRDLIAPLELCYQSLHDCGMGVIAEGPLLDCLRRAVTFGLFLGRLDVRQDAARHRDALTEITDYLGLGRYADWDEEQRIGFLQAELKNRRPLLPAHFKPQADTAEVLATCREVAAAPAASLGSYVISMAGAASDVLAVQLLLKEAGLTRPMRVVPLFETLADLDNAGPVMQRLLGLPGYRAGLRGPQEVMIGYSDSAKDAGTTAAAWAQYRAQENLVRICAEHQVELLLFHGRGGTVGRGGGPAHAAILSQPPGSVAGRFRTTEQGEMIRFKFGLPGIAEQNLNLYLAAVLEATLLPPPPPQPAWRELMDQLAADGVKAYRSVVRENPDFVEYFRQSTPEQELGRLPLGSRPAKRRAGGIESLRAIPWIFGWTQTRLMLPAWLGWETALSNALARGQGELLAQMREQWPFFRTRIDMLEMVLAKADAQIAEAYDERLVQPHLLPLGAHLRDLLSQSCQVVLGLTGQPVLLAHSPETLEFISLRNTYLDPLHRLQAELLARSRSREAALDSPLEQALLVTVAGIAAGLRNTG.

Residues His137 and Lys542 contribute to the active site.

It belongs to the PEPCase type 1 family. It depends on Mg(2+) as a cofactor.

It catalyses the reaction oxaloacetate + phosphate = phosphoenolpyruvate + hydrogencarbonate. Its function is as follows. Forms oxaloacetate, a four-carbon dicarboxylic acid source for the tricarboxylic acid cycle. The polypeptide is Phosphoenolpyruvate carboxylase (Pseudomonas putida (strain GB-1)).